An 88-amino-acid chain; its full sequence is Small ribosomal subunit protein uS17 (88 aa).

This sequence belongs to the universal ribosomal protein uS17 family. In terms of assembly, part of the 30S ribosomal subunit.

One of the primary rRNA binding proteins, it binds specifically to the 5'-end of 16S ribosomal RNA. This Pseudomonas putida (strain ATCC 700007 / DSM 6899 / JCM 31910 / BCRC 17059 / LMG 24140 / F1) protein is Small ribosomal subunit protein uS17.